Consider the following 552-residue polypeptide: HTH-type transcriptional regulator SgrR (552 aa).

Positions 1-116 constitute an HTH marR-type domain; sequence MPSGRLQQQF…LISHLGRSFR (116 aa). The segment at residues 26–49 is a DNA-binding region (H-T-H motif); it reads LNELADLLNCSRRHMRTLLNTMQA. The tract at residues 163 to 493 is solute-binding; the sequence is ELEADIAHHW…RDWQDDAAQW (331 aa).

In terms of biological role, activates the small RNA gene sgrS under glucose-phosphate stress conditions as well as yfdZ. Represses its own transcription under both stress and non-stress conditions. Might act as a sensor of the intracellular accumulation of phosphoglucose by binding these molecules in its C-terminal solute-binding domain. The sequence is that of HTH-type transcriptional regulator SgrR from Salmonella typhi.